A 477-amino-acid chain; its full sequence is Glycogen synthase (477 aa).

Lys15 is an ADP-alpha-D-glucose binding site.

This sequence belongs to the glycosyltransferase 1 family. Bacterial/plant glycogen synthase subfamily.

The catalysed reaction is [(1-&gt;4)-alpha-D-glucosyl](n) + ADP-alpha-D-glucose = [(1-&gt;4)-alpha-D-glucosyl](n+1) + ADP + H(+). The protein operates within glycan biosynthesis; glycogen biosynthesis. In terms of biological role, synthesizes alpha-1,4-glucan chains using ADP-glucose. The sequence is that of Glycogen synthase from Halorhodospira halophila (strain DSM 244 / SL1) (Ectothiorhodospira halophila (strain DSM 244 / SL1)).